We begin with the raw amino-acid sequence, 95 residues long: Aspartyl/glutamyl-tRNA(Asn/Gln) amidotransferase subunit C (95 aa).

The protein belongs to the GatC family. In terms of assembly, heterotrimer of A, B and C subunits.

It carries out the reaction L-glutamyl-tRNA(Gln) + L-glutamine + ATP + H2O = L-glutaminyl-tRNA(Gln) + L-glutamate + ADP + phosphate + H(+). It catalyses the reaction L-aspartyl-tRNA(Asn) + L-glutamine + ATP + H2O = L-asparaginyl-tRNA(Asn) + L-glutamate + ADP + phosphate + 2 H(+). Functionally, allows the formation of correctly charged Asn-tRNA(Asn) or Gln-tRNA(Gln) through the transamidation of misacylated Asp-tRNA(Asn) or Glu-tRNA(Gln) in organisms which lack either or both of asparaginyl-tRNA or glutaminyl-tRNA synthetases. The reaction takes place in the presence of glutamine and ATP through an activated phospho-Asp-tRNA(Asn) or phospho-Glu-tRNA(Gln). The protein is Aspartyl/glutamyl-tRNA(Asn/Gln) amidotransferase subunit C of Pseudomonas putida (strain W619).